The primary structure comprises 98 residues: Small ribosomal subunit protein uS17B (98 aa).

This sequence belongs to the universal ribosomal protein uS17 family. In terms of assembly, part of the 30S ribosomal subunit.

Functionally, one of the primary rRNA binding proteins, it binds specifically to the 5'-end of 16S ribosomal RNA. This Bacteroides thetaiotaomicron (strain ATCC 29148 / DSM 2079 / JCM 5827 / CCUG 10774 / NCTC 10582 / VPI-5482 / E50) protein is Small ribosomal subunit protein uS17B.